We begin with the raw amino-acid sequence, 525 residues long: Glutamyl-tRNA(Gln) amidotransferase subunit A, mitochondrial (525 aa).

Residues lysine 76 and serine 168 each act as charge relay system in the active site. The active-site Acyl-ester intermediate is the serine 192.

The protein belongs to the amidase family. GatA subfamily. As to quaternary structure, subunit of the heterotrimeric GatCAB amidotransferase (AdT) complex, composed of A (QRSL1), B (GATB) and C (GATC) subunits.

Its subcellular location is the mitochondrion. It catalyses the reaction L-glutamyl-tRNA(Gln) + L-glutamine + ATP + H2O = L-glutaminyl-tRNA(Gln) + L-glutamate + ADP + phosphate + H(+). Its function is as follows. Allows the formation of correctly charged Gln-tRNA(Gln) through the transamidation of misacylated Glu-tRNA(Gln) in the mitochondria. The reaction takes place in the presence of glutamine and ATP through an activated gamma-phospho-Glu-tRNA(Gln). This is Glutamyl-tRNA(Gln) amidotransferase subunit A, mitochondrial (Qrsl1) from Rattus norvegicus (Rat).